The primary structure comprises 274 residues: Ribose-5-phosphate isomerase (274 aa).

It belongs to the ribose 5-phosphate isomerase family.

It is found in the cytoplasm. The catalysed reaction is aldehydo-D-ribose 5-phosphate = D-ribulose 5-phosphate. It participates in carbohydrate degradation; pentose phosphate pathway; D-ribose 5-phosphate from D-ribulose 5-phosphate (non-oxidative stage): step 1/1. This Schizosaccharomyces pombe (strain 972 / ATCC 24843) (Fission yeast) protein is Ribose-5-phosphate isomerase (rki1).